The following is a 494-amino-acid chain: Glutamyl-tRNA(Gln) amidotransferase subunit A (494 aa).

Active-site charge relay system residues include Lys79 and Ser154. Ser178 acts as the Acyl-ester intermediate in catalysis.

This sequence belongs to the amidase family. GatA subfamily. Heterotrimer of A, B and C subunits.

It carries out the reaction L-glutamyl-tRNA(Gln) + L-glutamine + ATP + H2O = L-glutaminyl-tRNA(Gln) + L-glutamate + ADP + phosphate + H(+). Functionally, allows the formation of correctly charged Gln-tRNA(Gln) through the transamidation of misacylated Glu-tRNA(Gln) in organisms which lack glutaminyl-tRNA synthetase. The reaction takes place in the presence of glutamine and ATP through an activated gamma-phospho-Glu-tRNA(Gln). The polypeptide is Glutamyl-tRNA(Gln) amidotransferase subunit A (Clostridium kluyveri (strain NBRC 12016)).